Reading from the N-terminus, the 206-residue chain is Outer-membrane lipoprotein carrier protein (206 aa).

A signal peptide spans 1-21; the sequence is MKKLLCAVLLSPLLYSNAVLA.

This sequence belongs to the LolA family. In terms of assembly, monomer.

The protein resides in the periplasm. Participates in the translocation of lipoproteins from the inner membrane to the outer membrane. Only forms a complex with a lipoprotein if the residue after the N-terminal Cys is not an aspartate (The Asp acts as a targeting signal to indicate that the lipoprotein should stay in the inner membrane). The polypeptide is Outer-membrane lipoprotein carrier protein (Shewanella sp. (strain ANA-3)).